A 379-amino-acid chain; its full sequence is S-adenosylmethionine:tRNA ribosyltransferase-isomerase (379 aa).

The interval 35-58 (AESRPHAESVPHAESRPHAESAFS) is disordered.

It belongs to the QueA family. In terms of assembly, monomer.

The protein localises to the cytoplasm. The catalysed reaction is 7-aminomethyl-7-carbaguanosine(34) in tRNA + S-adenosyl-L-methionine = epoxyqueuosine(34) in tRNA + adenine + L-methionine + 2 H(+). It participates in tRNA modification; tRNA-queuosine biosynthesis. In terms of biological role, transfers and isomerizes the ribose moiety from AdoMet to the 7-aminomethyl group of 7-deazaguanine (preQ1-tRNA) to give epoxyqueuosine (oQ-tRNA). This chain is S-adenosylmethionine:tRNA ribosyltransferase-isomerase, found in Rhizobium leguminosarum bv. trifolii (strain WSM2304).